The primary structure comprises 386 residues: Protein phosphatase methylesterase 1 (386 aa).

Residues 20–48 (ILEKLKGGQEPNSNEEGSDSIGDLPSLKN) are disordered. Residues Ser194, Asp222, and His348 contribute to the active site.

The protein belongs to the AB hydrolase superfamily.

It catalyses the reaction [phosphatase 2A protein]-C-terminal L-leucine methyl ester + H2O = [phosphatase 2A protein]-C-terminal L-leucine + methanol + H(+). Its function is as follows. Demethylates proteins that have been reversibly carboxymethylated. Demethylates the phosphatase PP2A catalytic subunit. In Candida glabrata (strain ATCC 2001 / BCRC 20586 / JCM 3761 / NBRC 0622 / NRRL Y-65 / CBS 138) (Yeast), this protein is Protein phosphatase methylesterase 1 (PPE1).